Here is a 280-residue protein sequence, read N- to C-terminus: uncharacterized protein (280 aa).

The first 21 residues, 1–21 (MRPAIKVGLSTASVYPLRAEA), serve as a signal peptide directing secretion.

The protein to M.leprae ML2432 and S.coelicolor SCO3347.

This is an uncharacterized protein from Mycobacterium tuberculosis (strain CDC 1551 / Oshkosh).